A 152-amino-acid polypeptide reads, in one-letter code: Small ribosomal subunit protein uS13 (152 aa).

This sequence belongs to the universal ribosomal protein uS13 family. Part of the 30S ribosomal subunit. Forms a loose heterodimer with protein S19. Forms two bridges to the 50S subunit in the 70S ribosome.

Functionally, located at the top of the head of the 30S subunit, it contacts several helices of the 16S rRNA. In the 70S ribosome it contacts the 23S rRNA (bridge B1a) and protein L5 of the 50S subunit (bridge B1b), connecting the 2 subunits; these bridges are implicated in subunit movement. The sequence is that of Small ribosomal subunit protein uS13 from Pyrobaculum aerophilum (strain ATCC 51768 / DSM 7523 / JCM 9630 / CIP 104966 / NBRC 100827 / IM2).